The chain runs to 504 residues: ATP synthase subunit alpha (504 aa).

Position 169 to 176 (169 to 176) interacts with ATP; it reads GDRQTGKT.

This sequence belongs to the ATPase alpha/beta chains family. In terms of assembly, F-type ATPases have 2 components, CF(1) - the catalytic core - and CF(0) - the membrane proton channel. CF(1) has five subunits: alpha(3), beta(3), gamma(1), delta(1), epsilon(1). CF(0) has three main subunits: a(1), b(2) and c(9-12). The alpha and beta chains form an alternating ring which encloses part of the gamma chain. CF(1) is attached to CF(0) by a central stalk formed by the gamma and epsilon chains, while a peripheral stalk is formed by the delta and b chains.

It is found in the cell membrane. The enzyme catalyses ATP + H2O + 4 H(+)(in) = ADP + phosphate + 5 H(+)(out). Produces ATP from ADP in the presence of a proton gradient across the membrane. The alpha chain is a regulatory subunit. The chain is ATP synthase subunit alpha from Clostridium botulinum (strain Alaska E43 / Type E3).